A 158-amino-acid polypeptide reads, in one-letter code: Sec-independent protein translocase protein TatB (158 aa).

A helical transmembrane segment spans residues 1 to 21 (MFDIGWSELLVIGVVALVVVG). Residues 73–158 (RSMGLDAMKQ…PAPAEPKSNA (86 aa)) form a disordered region. The span at 83-92 (AADRFEKWDP) shows a compositional bias: basic and acidic residues. Composition is skewed to low complexity over residues 94–132 (KPQQGAPKPAAPASSIPAAKAQQGAGAAAVTAPPASEPA) and 138–158 (APAAAAPEAASPAPAEPKSNA).

It belongs to the TatB family. The Tat system comprises two distinct complexes: a TatABC complex, containing multiple copies of TatA, TatB and TatC subunits, and a separate TatA complex, containing only TatA subunits. Substrates initially bind to the TatABC complex, which probably triggers association of the separate TatA complex to form the active translocon.

The protein resides in the cell inner membrane. In terms of biological role, part of the twin-arginine translocation (Tat) system that transports large folded proteins containing a characteristic twin-arginine motif in their signal peptide across membranes. Together with TatC, TatB is part of a receptor directly interacting with Tat signal peptides. TatB may form an oligomeric binding site that transiently accommodates folded Tat precursor proteins before their translocation. This chain is Sec-independent protein translocase protein TatB, found in Cereibacter sphaeroides (strain ATCC 17029 / ATH 2.4.9) (Rhodobacter sphaeroides).